A 184-amino-acid polypeptide reads, in one-letter code: Protein N-terminal glutamine amidohydrolase (184 aa).

Active-site residues include cysteine 14, histidine 63, and aspartate 78.

The protein belongs to the NTAQ1 family. Monomer.

The catalysed reaction is N-terminal L-glutaminyl-[protein] + H2O = N-terminal L-glutamyl-[protein] + NH4(+). Its function is as follows. Mediates the side-chain deamidation of N-terminal glutamine residues to glutamate, an important step in N-end rule pathway of protein degradation. Conversion of the resulting N-terminal glutamine to glutamate renders the protein susceptible to arginylation, polyubiquitination and degradation as specified by the N-end rule. Does not act on substrates with internal or C-terminal glutamine and does not act on non-glutamine residues in any position. This is Protein N-terminal glutamine amidohydrolase from Caenorhabditis elegans.